The primary structure comprises 75 residues: Sec-independent protein translocase protein TatA (75 aa).

Residues 1–21 (MGSFSIWHWLIVLVIVVLVFG) form a helical membrane-spanning segment. Composition is skewed to basic and acidic residues over residues 43–54 (MRDSEKSGEDVQ) and 66–75 (ATDKSHTVSH). Residues 43-75 (MRDSEKSGEDVQQKIGGDTLDAQATDKSHTVSH) form a disordered region.

Belongs to the TatA/E family. As to quaternary structure, the Tat system comprises two distinct complexes: a TatABC complex, containing multiple copies of TatA, TatB and TatC subunits, and a separate TatA complex, containing only TatA subunits. Substrates initially bind to the TatABC complex, which probably triggers association of the separate TatA complex to form the active translocon.

It is found in the cell inner membrane. Functionally, part of the twin-arginine translocation (Tat) system that transports large folded proteins containing a characteristic twin-arginine motif in their signal peptide across membranes. TatA could form the protein-conducting channel of the Tat system. In Aromatoleum aromaticum (strain DSM 19018 / LMG 30748 / EbN1) (Azoarcus sp. (strain EbN1)), this protein is Sec-independent protein translocase protein TatA.